The chain runs to 326 residues: tRNA-modifying protein YgfZ (326 aa).

Folate contacts are provided by W27 and W189.

It belongs to the tRNA-modifying YgfZ family.

It localises to the cytoplasm. In terms of biological role, folate-binding protein involved in regulating the level of ATP-DnaA and in the modification of some tRNAs. It is probably a key factor in regulatory networks that act via tRNA modification, such as initiation of chromosomal replication. The polypeptide is tRNA-modifying protein YgfZ (Escherichia fergusonii (strain ATCC 35469 / DSM 13698 / CCUG 18766 / IAM 14443 / JCM 21226 / LMG 7866 / NBRC 102419 / NCTC 12128 / CDC 0568-73)).